Reading from the N-terminus, the 705-residue chain is Protein artemis (705 aa).

Thr380 bears the Phosphothreonine mark. The residue at position 385 (Ser385) is a Phosphoserine. Residues 451–462 show a composition bias toward acidic residues; sequence EESNSDSGEELE. 3 disordered regions span residues 451–484, 535–569, and 638–675; these read EESN…NADP, PKLC…GWDS, and TLSG…AELP. Residues 546–559 are compositionally biased toward low complexity; the sequence is THISSQNSSQSTHI. The span at 560–569 shows a compositional bias: polar residues; the sequence is TDQGSQGWDS. Positions 652–662 are enriched in low complexity; the sequence is SSTRADSQSSS. Ser658 carries the phosphoserine; by ATM modification.

It belongs to the DNA repair metallo-beta-lactamase (DRMBL) family. Interacts with LIG4; the interaction is direct. Interacts with ATM. Interacts with BRCA1. Interacts with PRKDC. Interacts with TP53BP1. Also exhibits ATM- and phosphorylation-dependent interaction with the MRN complex, composed of MRE11, RAD50, and NBN. Phosphorylation on undefined residues by PRKDC may stimulate endonucleolytic activity on 5' and 3' hairpins and overhangs. PRKDC must remain present, even after phosphorylation, for efficient hairpin opening. Also phosphorylated by ATM in response to ionizing radiation (IR) and by ATR in response to ultraviolet (UV) radiation.

The protein resides in the nucleus. Its function is as follows. Required for V(D)J recombination, the process by which exons encoding the antigen-binding domains of immunoglobulins and T-cell receptor proteins are assembled from individual V, (D), and J gene segments. V(D)J recombination is initiated by the lymphoid specific RAG endonuclease complex, which generates site specific DNA double strand breaks (DSBs). These DSBs present two types of DNA end structures: hairpin sealed coding ends and phosphorylated blunt signal ends. These ends are independently repaired by the non homologous end joining (NHEJ) pathway to form coding and signal joints respectively. This protein likely exhibits single-strand specific 5'-3' exonuclease activity in isolation, and may acquire endonucleolytic activity on 5' and 3' hairpins and overhangs when in a complex with PRKDC. The latter activity may be required specifically for the resolution of closed hairpins prior to the formation of the coding joint. May also be required for the repair of complex DSBs induced by ionizing radiation, which require substantial end-processing prior to religation by NHEJ. In Mus musculus (Mouse), this protein is Protein artemis (Dclre1c).